Reading from the N-terminus, the 63-residue chain is Cecropin-C (63 aa).

An N-terminal signal peptide occupies residues 1-23 (MNFNKIFVFVALILAISLGQSEA). Residue arginine 62 is modified to Arginine amide.

Belongs to the cecropin family.

Its subcellular location is the secreted. Functionally, cecropins have lytic and antibacterial activity against several Gram-positive and Gram-negative bacteria. The chain is Cecropin-C (CecC) from Drosophila orena (Fruit fly).